The following is a 261-amino-acid chain: uncharacterized protein (261 aa).

The disordered stretch occupies residues 1–22; that stretch reads MGVADNEYISVPTGEPVQQQPQ. Helical transmembrane passes span 92 to 112, 122 to 142, and 147 to 167; these read IIIL…ILGL, IVVM…IFLF, and INTI…LMNY.

It is found in the membrane. This is an uncharacterized protein from Dictyostelium discoideum (Social amoeba).